We begin with the raw amino-acid sequence, 375 residues long: Aminomethyltransferase (375 aa).

The protein belongs to the GcvT family. In terms of assembly, the glycine cleavage system is composed of four proteins: P, T, L and H.

It carries out the reaction N(6)-[(R)-S(8)-aminomethyldihydrolipoyl]-L-lysyl-[protein] + (6S)-5,6,7,8-tetrahydrofolate = N(6)-[(R)-dihydrolipoyl]-L-lysyl-[protein] + (6R)-5,10-methylene-5,6,7,8-tetrahydrofolate + NH4(+). Functionally, the glycine cleavage system catalyzes the degradation of glycine. This is Aminomethyltransferase from Cupriavidus necator (strain ATCC 17699 / DSM 428 / KCTC 22496 / NCIMB 10442 / H16 / Stanier 337) (Ralstonia eutropha).